We begin with the raw amino-acid sequence, 214 residues long: A-type ATP synthase subunit D (214 aa).

This sequence belongs to the V-ATPase D subunit family. Has multiple subunits with at least A(3), B(3), C, D, E, F, H, I and proteolipid K(x).

The protein resides in the cell membrane. In terms of biological role, component of the A-type ATP synthase that produces ATP from ADP in the presence of a proton gradient across the membrane. In Thermococcus kodakarensis (strain ATCC BAA-918 / JCM 12380 / KOD1) (Pyrococcus kodakaraensis (strain KOD1)), this protein is A-type ATP synthase subunit D.